We begin with the raw amino-acid sequence, 225 residues long: Transmembrane protein C16orf54 homolog (225 aa).

Residues 32-52 (PCIPIMLGLASLTAFFIITTA) form a helical membrane-spanning segment. Disordered stretches follow at residues 106 to 163 (DRAP…ERPH) and 178 to 200 (EAGL…EPDW). 2 positions are modified to phosphothreonine: Thr113 and Thr117. Low complexity predominate over residues 122–140 (ATAPPATSAPYSSLSSLVP). Residue Ser195 is modified to Phosphoserine.

The protein resides in the membrane. The sequence is that of Transmembrane protein C16orf54 homolog from Mus musculus (Mouse).